We begin with the raw amino-acid sequence, 319 residues long: Olfactory receptor 8U3 (319 aa).

Over 1 to 25 (MAEVNISYVSEFILKGITDRPELQA) the chain is Extracellular. A glycan (N-linked (GlcNAc...) asparagine) is linked at N5. The helical transmembrane segment at 26–46 (PCFVMFLTIYLVTVLGNLGLI) threads the bilayer. Residues 47 to 54 (VIIRVDSR) lie on the Cytoplasmic side of the membrane. The chain crosses the membrane as a helical span at residues 55–75 (LHTPMYFFLSHLAFVDLCYSS). Residues 76 to 99 (AITPKMMVNFVVERNTIPFHACAT) lie on the Extracellular side of the membrane. A disulfide bond links C97 and C189. Residues 100 to 120 (QLGCFLTFMITECFLLASMAY) traverse the membrane as a helical segment. The Cytoplasmic segment spans residues 121–133 (DRYVAICSPLHYS). A helical membrane pass occupies residues 134 to 154 (TLMSKRVCIQLVAVPYVYSFL). At 155–196 (VALFHTIITFRLTYCGPNVINHFYCDDLPLLALSCSDTHMKE) the chain is on the extracellular side. A helical transmembrane segment spans residues 197–217 (ILIFAFAGFDMICSSSIVLTS). At 218-237 (YLFIIAAILRIRSTQGRRKA) the chain is on the cytoplasmic side. Residues 238–258 (ISTCGSHMVAVTIFYGTLIFM) form a helical membrane-spanning segment. Topologically, residues 259 to 271 (YLQPKSNHSLDTD) are extracellular. N265 is a glycosylation site (N-linked (GlcNAc...) asparagine). A helical membrane pass occupies residues 272–292 (KMASVFYTVVIPMLNPLIYSL). Residues 293–319 (RNKEVKDASKKALDKGYETLKILRLSK) are Cytoplasmic-facing.

It belongs to the G-protein coupled receptor 1 family.

Its subcellular location is the cell membrane. Its function is as follows. Potential odorant receptor. This chain is Olfactory receptor 8U3, found in Mus musculus (Mouse).